A 412-amino-acid polypeptide reads, in one-letter code: cAMP-dependent protein kinase regulatory subunit (412 aa).

The tract at residues 1-142 (MSFEEVYEEL…RLKRSVAGNF (142 aa)) is dimerization and phosphorylation. The Pseudophosphorylation motif motif lies at 101–105 (RRQSV). Serine 104 carries the post-translational modification Phosphoserine. Residues 143–277 (LFKN…EEVP), glutamate 224, arginine 233, 278–412 (ILSS…STKA), glutamate 344, and arginine 353 contribute to the 3',5'-cyclic AMP site. A disordered region spans residues 392–412 (MGMDNEYGDQSLHRSPPSTKA).

The protein belongs to the cAMP-dependent kinase regulatory chain family. Tetramer, composed of 2 regulatory (R) and 2 catalytic (C) subunits. In the presence of cAMP it dissociates into 2 active monomeric C subunits and an R dimer.

This Schizosaccharomyces pombe (strain 972 / ATCC 24843) (Fission yeast) protein is cAMP-dependent protein kinase regulatory subunit (cgs1).